The primary structure comprises 307 residues: Protein phosphatase PTC7 homolog fig (307 aa).

One can recognise a PPM-type phosphatase domain in the interval 41–300 (VQGSSKDQQL…DDITVILASV (260 aa)). 3 residues coordinate Mn(2+): D77, G78, and D222.

The protein belongs to the PP2C family. Mg(2+) serves as cofactor. Mn(2+) is required as a cofactor.

The enzyme catalyses O-phospho-L-seryl-[protein] + H2O = L-seryl-[protein] + phosphate. The catalysed reaction is O-phospho-L-threonyl-[protein] + H2O = L-threonyl-[protein] + phosphate. The chain is Protein phosphatase PTC7 homolog fig from Drosophila grimshawi (Hawaiian fruit fly).